Reading from the N-terminus, the 482-residue chain is Variant surface glycoprotein ANTAT 1.1C (482 aa).

A signal peptide spans 1–8; it reads LHPQQALA. Cystine bridges form between cysteine 24–cysteine 151 and cysteine 133–cysteine 188. N-linked (GlcNAc...) asparagine glycosylation occurs at asparagine 92. N-linked (GlcNAc...) asparagine glycans are attached at residues asparagine 398 and asparagine 411. Residue aspartate 459 is the site of GPI-anchor amidated aspartate attachment. Positions 460–482 are cleaved as a propeptide — removed in mature form; the sequence is SSILVTKKFALSLVSAAFASLLF.

The protein localises to the cell membrane. In terms of biological role, VSG forms a coat on the surface of the parasite. The trypanosome evades the immune response of the host by expressing a series of antigenically distinct VSGs from an estimated 1000 VSG genes. The sequence is that of Variant surface glycoprotein ANTAT 1.1C from Trypanosoma brucei brucei.